A 107-amino-acid chain; its full sequence is Colipase (107 aa).

The signal sequence occupies residues 1-17 (MEKVLVLLLVALSVAYA). Residues 18 to 22 (APGPR) constitute a propeptide, enterostatin, activation peptide. Disulfide bonds link Cys34–Cys45, Cys40–Cys56, Cys44–Cys78, Cys66–Cys86, and Cys80–Cys104.

Belongs to the colipase family. As to quaternary structure, forms a 1:1 stoichiometric complex with pancreatic lipase. Expressed by the pancreas.

The protein localises to the secreted. In terms of biological role, colipase is a cofactor of pancreatic lipase. It allows the lipase to anchor itself to the lipid-water interface. Without colipase the enzyme is washed off by bile salts, which have an inhibitory effect on the lipase. Functionally, enterostatin has a biological activity as a satiety signal. This is Colipase (CLPS) from Oryctolagus cuniculus (Rabbit).